We begin with the raw amino-acid sequence, 573 residues long: 2-succinyl-5-enolpyruvyl-6-hydroxy-3-cyclohexene-1-carboxylate synthase (573 aa).

Belongs to the TPP enzyme family. MenD subfamily. As to quaternary structure, homodimer. It depends on Mg(2+) as a cofactor. Requires Mn(2+) as cofactor. Thiamine diphosphate serves as cofactor.

The enzyme catalyses isochorismate + 2-oxoglutarate + H(+) = 5-enolpyruvoyl-6-hydroxy-2-succinyl-cyclohex-3-ene-1-carboxylate + CO2. It participates in quinol/quinone metabolism; 1,4-dihydroxy-2-naphthoate biosynthesis; 1,4-dihydroxy-2-naphthoate from chorismate: step 2/7. It functions in the pathway quinol/quinone metabolism; menaquinone biosynthesis. Catalyzes the thiamine diphosphate-dependent decarboxylation of 2-oxoglutarate and the subsequent addition of the resulting succinic semialdehyde-thiamine pyrophosphate anion to isochorismate to yield 2-succinyl-5-enolpyruvyl-6-hydroxy-3-cyclohexene-1-carboxylate (SEPHCHC). The polypeptide is 2-succinyl-5-enolpyruvyl-6-hydroxy-3-cyclohexene-1-carboxylate synthase (Shewanella baltica (strain OS185)).